The chain runs to 511 residues: Maturase K (511 aa).

The protein belongs to the intron maturase 2 family. MatK subfamily.

The protein localises to the plastid. Its subcellular location is the chloroplast. Its function is as follows. Usually encoded in the trnK tRNA gene intron. Probably assists in splicing its own and other chloroplast group II introns. This is Maturase K from Hordeum murinum subsp. leporinum (Mouse barley).